The chain runs to 500 residues: GTPase Der (500 aa).

EngA-type G domains are found at residues 3–166 (PVVA…MEEL) and 211–384 (IKLA…VSAT). GTP contacts are provided by residues 9–16 (GRPNVGKS), 56–60 (DTGGI), 118–121 (NKID), 217–224 (GRPNVGKS), 264–268 (DTAGV), and 329–332 (NKWD). One can recognise a KH-like domain in the interval 385–469 (KRVGTSVLTR…PIRIQFQNSE (85 aa)). The segment at 468–500 (SENPFEDRGGKLTMSQERQRKRLLGAVKNRNKK) is disordered. The span at 486–500 (QRKRLLGAVKNRNKK) shows a compositional bias: basic residues.

It belongs to the TRAFAC class TrmE-Era-EngA-EngB-Septin-like GTPase superfamily. EngA (Der) GTPase family. Associates with the 50S ribosomal subunit.

Its function is as follows. GTPase that plays an essential role in the late steps of ribosome biogenesis. This chain is GTPase Der, found in Aliivibrio fischeri (strain ATCC 700601 / ES114) (Vibrio fischeri).